The primary structure comprises 427 residues: Probable anaerobic glycerol-3-phosphate dehydrogenase subunit B (427 aa).

It belongs to the anaerobic G-3-P dehydrogenase subunit B family. Requires FMN as cofactor.

It carries out the reaction a quinone + sn-glycerol 3-phosphate = dihydroxyacetone phosphate + a quinol. The protein operates within polyol metabolism; glycerol degradation via glycerol kinase pathway; glycerone phosphate from sn-glycerol 3-phosphate (anaerobic route): step 1/1. The chain is Probable anaerobic glycerol-3-phosphate dehydrogenase subunit B from Halobacterium salinarum (strain ATCC 29341 / DSM 671 / R1).